The following is a 63-amino-acid chain: H/ACA ribonucleoprotein complex subunit 3-like protein (63 aa).

Residues 18–40 form a disordered region; sequence KMDPEGKPTLSAHPARFSPDDKY.

This sequence belongs to the NOP10 family. Component of the small nucleolar ribonucleoprotein particles containing H/ACA-type snoRNAs (H/ACA snoRNPs).

It is found in the nucleus. The protein resides in the nucleolus. Its function is as follows. Required for ribosome biogenesis. Part of a complex which catalyzes pseudouridylation of rRNA. This involves the isomerization of uridine such that the ribose is subsequently attached to C5, instead of the normal N1. Pseudouridine ('psi') residues may serve to stabilize the conformation of rRNAs. The polypeptide is H/ACA ribonucleoprotein complex subunit 3-like protein (Trypanosoma cruzi).